We begin with the raw amino-acid sequence, 358 residues long: Uroporphyrinogen decarboxylase (358 aa).

Residues 27–31 (RQAGR), aspartate 77, tyrosine 154, serine 209, and histidine 327 each bind substrate.

It belongs to the uroporphyrinogen decarboxylase family. Homodimer.

It is found in the cytoplasm. It carries out the reaction uroporphyrinogen III + 4 H(+) = coproporphyrinogen III + 4 CO2. The protein operates within porphyrin-containing compound metabolism; protoporphyrin-IX biosynthesis; coproporphyrinogen-III from 5-aminolevulinate: step 4/4. In terms of biological role, catalyzes the decarboxylation of four acetate groups of uroporphyrinogen-III to yield coproporphyrinogen-III. This chain is Uroporphyrinogen decarboxylase, found in Azoarcus sp. (strain BH72).